Consider the following 433-residue polypeptide: Shikimate O-hydroxycinnamoyltransferase (433 aa).

The active-site Proton acceptor is the His153. Residues 252 to 255 (SSYE), 284 to 290 (DGRSRLR), and 370 to 373 (SWVR) each bind 4-coumaroyl-CoA. Asp380 functions as the Proton acceptor in the catalytic mechanism.

The protein belongs to the plant acyltransferase family.

The catalysed reaction is shikimate + 4-coumaroyl-CoA = trans-4-coumaroylshikimate + CoA. Acyltransferase involved in the biosynthesis of lignin. Accepts caffeoyl-CoA and p-coumaroyl-CoA as substrates and transfers the acyl group on both shikimate and quinate acceptors. This Arabidopsis thaliana (Mouse-ear cress) protein is Shikimate O-hydroxycinnamoyltransferase (HST).